Consider the following 109-residue polypeptide: uncharacterized protein (109 aa).

The signal sequence occupies residues 1–25; it reads MKGIFLVVQLGFSIMVFLFLAAVNW. A helical transmembrane segment spans residues 73–95; sequence YPVMSALMIISFLYVLAALFLLI.

The protein localises to the membrane. This is an uncharacterized protein from Bacillus subtilis (strain 168).